The primary structure comprises 103 residues: Co-chaperonin GroES (103 aa).

This sequence belongs to the GroES chaperonin family. As to quaternary structure, heptamer of 7 subunits arranged in a ring. Interacts with the chaperonin GroEL.

The protein resides in the cytoplasm. Together with the chaperonin GroEL, plays an essential role in assisting protein folding. The GroEL-GroES system forms a nano-cage that allows encapsulation of the non-native substrate proteins and provides a physical environment optimized to promote and accelerate protein folding. GroES binds to the apical surface of the GroEL ring, thereby capping the opening of the GroEL channel. The chain is Co-chaperonin GroES from Prochlorococcus marinus (strain MIT 9215).